The following is a 297-amino-acid chain: Protoheme IX farnesyltransferase 1 (297 aa).

Transmembrane regions (helical) follow at residues 23–43, 45–65, 93–113, 117–137, 145–165, 171–191, 216–236, 241–261, and 277–297; these read VVVL…RAGV, WSVL…AAVV, LPAL…LLVF, LTAW…TGFL, IVIG…AVSG, PLLL…ALAI, LHIL…YAIH, LYLA…WVLY, and IGYL…LLSL.

It belongs to the UbiA prenyltransferase family. Protoheme IX farnesyltransferase subfamily.

It is found in the cell inner membrane. It carries out the reaction heme b + (2E,6E)-farnesyl diphosphate + H2O = Fe(II)-heme o + diphosphate. The protein operates within porphyrin-containing compound metabolism; heme O biosynthesis; heme O from protoheme: step 1/1. In terms of biological role, converts heme B (protoheme IX) to heme O by substitution of the vinyl group on carbon 2 of heme B porphyrin ring with a hydroxyethyl farnesyl side group. The sequence is that of Protoheme IX farnesyltransferase 1 from Pseudomonas putida (strain ATCC 700007 / DSM 6899 / JCM 31910 / BCRC 17059 / LMG 24140 / F1).